A 455-amino-acid chain; its full sequence is Protein png1 (455 aa).

The segment at M1 to D110 is disordered. A compositionally biased stretch (low complexity) spans S38 to S53. The span at H59–T73 shows a compositional bias: pro residues. Positions G74–L98 are enriched in low complexity. Residues C199, C202, C231, and C236 each contribute to the Zn(2+) site. A disordered region spans residues N408–R455.

This sequence belongs to the transglutaminase-like superfamily. PNGase family.

The protein is Protein png1 (png1) of Aspergillus fumigatus (strain ATCC MYA-4609 / CBS 101355 / FGSC A1100 / Af293) (Neosartorya fumigata).